A 641-amino-acid chain; its full sequence is DEAD-box ATP-dependent RNA helicase 50 (641 aa).

Disordered regions lie at residues 86–115 (SMPS…IGNF), 129–189 (RSAH…LNSV), and 197–216 (DDLD…WGNI). Positions 150–159 (PSDESDEDGT) are enriched in acidic residues. The Q motif signature appears at 240–268 (RSFKEIGCSDEILGALRSFGFPRPSHIQA). The 182-residue stretch at 271–452 (YRPVLEGKSC…VETFPDCELI (182 aa)) folds into the Helicase ATP-binding domain. 284 to 291 (DQSGSGKT) is an ATP binding site. The DEAD box signature appears at 399–402 (DEVD). The Helicase C-terminal domain occupies 487-641 (NKKSALVKII…GHPLHDVPCV (155 aa)).

This sequence belongs to the DEAD box helicase family.

The catalysed reaction is ATP + H2O = ADP + phosphate + H(+). Functionally, probably involved in resistance to biotic and abiotic stresses. Confers tolerance to oxidative stress and mediates pathogenesis-related (PR) genes expression. Exhibits RNA-dependent ATPase and ATP-dependent RNA helicase activities in vitro. This Oryza sativa subsp. japonica (Rice) protein is DEAD-box ATP-dependent RNA helicase 50.